We begin with the raw amino-acid sequence, 520 residues long: MLIERGLLSIMASKCSGTWSTYKTYTTANGCPFMKPEGPPADGRTLALNDHHLVESLAHFNREKIPERAVHAKGAAAYGEFEVTADISDICNIDMLLGVGKKTPCVTRFSTTGLERGSAEGMRDLKGMATKFYTKEGNWDWVCLNFPFFFIRDPLKFPSLMHAQRRDPRTNLLNPNMYWDWVTSNHESLHMVLLQFSDFGTMFNWRSLSGYMGHAYKWVMPNGSFKYVHIFLSSDRGPNFSQGEQAKDNSDLDPDHATRDLYEAIERGDYPTWTANVQVVDPAEAPDLGFNILDVTKHWNLGTYPKDLPKIPSRPFGKLTLNRIPDNFFAEVEQLAFSPSNMVPGVLPSEDPILQARMFAYPDAQRYRLGPNHHKIPVNQCPMTFNPTLRDGTGTFDANYGSLPGYVSESQGVNFARPQEHDPKFNAWLSQLSSRPWMQTNENDYKFPRDFYNALPEFRSQEFQDKMVENIIASVAQTRREIREKVYHTFHLVDPELSARVKRGVEKMDASFKQVSLSRL.

Residue H71 is part of the active site. Heme is bound at residue Y361.

It belongs to the catalase family. The cofactor is heme.

It participates in alkaloid biosynthesis; ergot alkaloid biosynthesis. In terms of biological role, catalase; part of the gene cluster that mediates the biosynthesis of fumiclavanine C, a fungal ergot alkaloid. DmaW catalyzes the first step of ergot alkaloid biosynthesis by condensing dimethylallyl diphosphate (DMAP) and tryptophan to form 4-dimethylallyl-L-tryptophan. The second step is catalyzed by the methyltransferase easF that methylates 4-dimethylallyl-L-tryptophan in the presence of S-adenosyl-L-methionine, resulting in the formation of 4-dimethylallyl-L-abrine. The catalase easC and the FAD-dependent oxidoreductase easE then transform 4-dimethylallyl-L-abrine to chanoclavine-I which is further oxidized by EasD in the presence of NAD(+), resulting in the formation of chanoclavine-I aldehyde. EasA reduces chanoclavine-I aldehyde to dihydrochanoclavine-I aldehyde that spontaneously dehydrates to form 6,8-dimethyl-6,7-didehydroergoline. EasG then catalyzes the reduction of 6,8-dimethyl-6,7-didehydroergoline to form festuclavine. Hydrolysis of festuclavine by easM then leads to the formation of fumigaclavine B which is in turn acetylated by easN to fumigaclavine A. Finally, easL catalyzes the conversion of fumigaclavine A into fumigaclavine C by attaching a dimethylallyl moiety to C-2 of the indole nucleus. The chain is Catalase easC from Aspergillus fumigatus (strain ATCC MYA-4609 / CBS 101355 / FGSC A1100 / Af293) (Neosartorya fumigata).